Reading from the N-terminus, the 318-residue chain is Ankyrin repeat and SOCS box protein 7 (318 aa).

7 ANK repeats span residues 13 to 42 (QEEL…SPNG), 46 to 75 (NGWT…DPTV), 80 to 109 (GGFT…RSDI), 116 to 145 (DGWT…EVDP), 149 to 178 (KGTT…NIDI), 180 to 208 (NGFL…DTDL), and 213 to 242 (DGQT…DTNT). Residues 265–318 (LDFLQEVTRQPRNLQDLCRIKIRQCIGLQNLKLLDELPIAKVMKDYLKHKFDDI) enclose the SOCS box domain.

It belongs to the ankyrin SOCS box (ASB) family. As to quaternary structure, interacts with CUL5. Interacts with RNF7. Interacts with PSRC1.

Its pathway is protein modification; protein ubiquitination. Probable substrate-recognition component of a SCF-like ECS (Elongin-Cullin-SOCS-box protein) E3 ubiquitin-protein ligase complex which mediates the ubiquitination and subsequent proteasomal degradation of target proteins. Plays a role in spindle dynamics and genome integrity by targeting the mitotic progression protein PSRC1 for proteasomal degradation in a cell cycle-dependent manner. Also participates in meiosis by mediating the proper attachment between kinetochores and microtubules. The polypeptide is Ankyrin repeat and SOCS box protein 7 (ASB7) (Macaca fascicularis (Crab-eating macaque)).